The chain runs to 194 residues: ATP-dependent Clp protease proteolytic subunit (194 aa).

The active-site Nucleophile is the S98. The active site involves H123.

This sequence belongs to the peptidase S14 family. As to quaternary structure, fourteen ClpP subunits assemble into 2 heptameric rings which stack back to back to give a disk-like structure with a central cavity, resembling the structure of eukaryotic proteasomes.

The protein localises to the cytoplasm. It catalyses the reaction Hydrolysis of proteins to small peptides in the presence of ATP and magnesium. alpha-casein is the usual test substrate. In the absence of ATP, only oligopeptides shorter than five residues are hydrolyzed (such as succinyl-Leu-Tyr-|-NHMec, and Leu-Tyr-Leu-|-Tyr-Trp, in which cleavage of the -Tyr-|-Leu- and -Tyr-|-Trp bonds also occurs).. Cleaves peptides in various proteins in a process that requires ATP hydrolysis. Has a chymotrypsin-like activity. Plays a major role in the degradation of misfolded proteins. The polypeptide is ATP-dependent Clp protease proteolytic subunit (Acetivibrio thermocellus (strain ATCC 27405 / DSM 1237 / JCM 9322 / NBRC 103400 / NCIMB 10682 / NRRL B-4536 / VPI 7372) (Clostridium thermocellum)).